A 336-amino-acid chain; its full sequence is tRNA-cytidine(32) 2-sulfurtransferase (336 aa).

A disordered region spans residues 1–34 (MNAPEILNGAATASPADATEATQTAARAKTPLTR). Low complexity predominate over residues 10-22 (AATASPADATEAT). Positions 75–80 (SGGKDS) match the PP-loop motif motif. Residues cysteine 150, cysteine 153, and cysteine 241 each coordinate [4Fe-4S] cluster.

It belongs to the TtcA family. Homodimer. It depends on Mg(2+) as a cofactor. The cofactor is [4Fe-4S] cluster.

It is found in the cytoplasm. The enzyme catalyses cytidine(32) in tRNA + S-sulfanyl-L-cysteinyl-[cysteine desulfurase] + AH2 + ATP = 2-thiocytidine(32) in tRNA + L-cysteinyl-[cysteine desulfurase] + A + AMP + diphosphate + H(+). It functions in the pathway tRNA modification. Functionally, catalyzes the ATP-dependent 2-thiolation of cytidine in position 32 of tRNA, to form 2-thiocytidine (s(2)C32). The sulfur atoms are provided by the cysteine/cysteine desulfurase (IscS) system. This is tRNA-cytidine(32) 2-sulfurtransferase from Paraburkholderia phytofirmans (strain DSM 17436 / LMG 22146 / PsJN) (Burkholderia phytofirmans).